The following is a 182-amino-acid chain: Cytidylate kinase (182 aa).

Residue Gly7–Ser15 participates in ATP binding.

This sequence belongs to the cytidylate kinase family. Type 2 subfamily.

It is found in the cytoplasm. It carries out the reaction CMP + ATP = CDP + ADP. It catalyses the reaction dCMP + ATP = dCDP + ADP. The polypeptide is Cytidylate kinase (Methanoregula boonei (strain DSM 21154 / JCM 14090 / 6A8)).